We begin with the raw amino-acid sequence, 586 residues long: Probable lysosomal cobalamin transporter (586 aa).

Helical transmembrane passes span 10–30, 47–67, 96–116, 147–167, 191–211, 315–335, 378–398, 420–440, and 509–529; these read IWIA…VTTF, VVSL…IALV, IVYY…IPFA, SGFI…PAAG, ALTF…VLYT, LVGG…MLIT, IIMA…LATV, ILIA…SIAM, and VFGA…LIVL. A glycan (N-linked (GlcNAc...) asparagine) is linked at N540.

This sequence belongs to the LIMR family. LMBRD1 subfamily.

The protein localises to the lysosome membrane. Its function is as follows. Probable lysosomal cobalamin transporter. Required to export cobalamin from lysosomes allowing its conversion to cofactors. This Pyricularia oryzae (strain 70-15 / ATCC MYA-4617 / FGSC 8958) (Rice blast fungus) protein is Probable lysosomal cobalamin transporter.